We begin with the raw amino-acid sequence, 267 residues long: 14-3-3-like protein GF14 chi (267 aa).

Ala-2 carries the N-acetylalanine modification. 2 positions are modified to phosphoserine: Ser-72 and Ser-195. At Thr-216 the chain carries Phosphothreonine. Phosphoserine is present on Ser-267.

It belongs to the 14-3-3 family. Interacts with TPK1. Interacts with the isocitrate dehydrogenase IDH3, and malate dehydrogenases MDH1 and MDH2. Interacts with DREB1A and DREB1B in the nucleus. Interacts with CINV1.

It localises to the nucleus. It is found in the cytoplasm. Its function is as follows. Is associated with a DNA binding complex that binds to the G box, a well-characterized cis-acting DNA regulatory element found in plant genes. Involved in the regulation of nutrient metabolism. The sequence is that of 14-3-3-like protein GF14 chi (GRF1) from Arabidopsis thaliana (Mouse-ear cress).